Reading from the N-terminus, the 693-residue chain is Elongation factor G (693 aa).

The tr-type G domain occupies 7 to 282 (EKIRNIGITA…SVIDYLPAPT (276 aa)). GTP is bound by residues 16-23 (AHIDAGKT), 80-84 (DTPGH), and 134-137 (NKLD).

Belongs to the TRAFAC class translation factor GTPase superfamily. Classic translation factor GTPase family. EF-G/EF-2 subfamily.

Its subcellular location is the cytoplasm. Functionally, catalyzes the GTP-dependent ribosomal translocation step during translation elongation. During this step, the ribosome changes from the pre-translocational (PRE) to the post-translocational (POST) state as the newly formed A-site-bound peptidyl-tRNA and P-site-bound deacylated tRNA move to the P and E sites, respectively. Catalyzes the coordinated movement of the two tRNA molecules, the mRNA and conformational changes in the ribosome. This chain is Elongation factor G, found in Granulibacter bethesdensis (strain ATCC BAA-1260 / CGDNIH1).